The primary structure comprises 171 residues: Ribosome maturation factor RimM (171 aa).

In terms of domain architecture, PRC barrel spans 96–170; it reads PDSYYHFQLE…TMTVRLPDGL (75 aa).

The protein belongs to the RimM family. In terms of assembly, binds ribosomal protein uS19.

It is found in the cytoplasm. Functionally, an accessory protein needed during the final step in the assembly of 30S ribosomal subunit, possibly for assembly of the head region. Essential for efficient processing of 16S rRNA. May be needed both before and after RbfA during the maturation of 16S rRNA. It has affinity for free ribosomal 30S subunits but not for 70S ribosomes. The polypeptide is Ribosome maturation factor RimM (Heliobacterium modesticaldum (strain ATCC 51547 / Ice1)).